The sequence spans 220 residues: MNNKLIPLSREFFARDTNIVSQELLGKVLYFQGKTAIITETESYIGQDDPACHAARGRTKRTDIMFGPAGFSYVYLIYGMYYCLNFVTETDGFPAATLIRGAYIISTKDLYTADTSKVGSQISGETARRILIREHRRIPKFDVPNLEVSKVDGPGKLCKYLGINISHNKIDLINNNEFFVSDINLKLPYSTTTRIGITKGIDKLWRYVVTNPIDLTKISF.

It belongs to the DNA glycosylase MPG family.

In Rickettsia bellii (strain RML369-C), this protein is Putative 3-methyladenine DNA glycosylase.